The primary structure comprises 1184 residues: DNA-directed RNA polymerase subunit beta (1184 aa).

The segment at 1160 to 1184 (DDDFTNQNDAFNIVQPENAAAEKTE) is disordered.

The protein belongs to the RNA polymerase beta chain family. The RNAP catalytic core consists of 2 alpha, 1 beta, 1 beta' and 1 omega subunit. When a sigma factor is associated with the core the holoenzyme is formed, which can initiate transcription.

The catalysed reaction is RNA(n) + a ribonucleoside 5'-triphosphate = RNA(n+1) + diphosphate. Its function is as follows. DNA-dependent RNA polymerase catalyzes the transcription of DNA into RNA using the four ribonucleoside triphosphates as substrates. The sequence is that of DNA-directed RNA polymerase subunit beta from Listeria monocytogenes serotype 4b (strain F2365).